Reading from the N-terminus, the 456-residue chain is Protein king tubby (456 aa).

Residues 111–202 are disordered; the sequence is HELEDEESSP…SNGAGGESEG (92 aa). The segment covering 120 to 152 has biased composition (polar residues); it reads PVTVIEQQQTAPHSANSTHSQRPSTTRQPSFND. Serine 149 bears the Phosphoserine mark.

It belongs to the TUB family.

The protein resides in the cytoplasm. Its subcellular location is the nucleus. It localises to the cell projection. The protein localises to the cilium membrane. It is found in the rhabdomere. The polypeptide is Protein king tubby (Drosophila pseudoobscura pseudoobscura (Fruit fly)).